A 781-amino-acid polypeptide reads, in one-letter code: Cadherin-24 (781 aa).

The N-terminal stretch at 1–22 (MWGLVRLLLAWLGGWGCMGRLA) is a signal peptide. Residues 23–44 (APVPAWAGSRGHSGPTLLRTRR) constitute a propeptide that is removed on maturation. Over 45–603 (SWVWNQFFVI…LSPTGLSTGA (559 aa)) the chain is Extracellular. Cadherin domains lie at 46-150 (WVWN…PPVF), 151-259 (PLGP…PPKF), 260-374 (PQSL…PPAF), 375-479 (TQAT…APQL), and 479-592 (LAEP…WPEA). 3 N-linked (GlcNAc...) asparagine glycosylation sites follow: Asn446, Asn510, and Asn525. A helical transmembrane segment spans residues 604–624 (LLAIVTCMGTLLALVVLFVAL). The Cytoplasmic portion of the chain corresponds to 625-781 (RRQKQEALMV…LYGAKEPPAP (157 aa)). Disordered regions lie at residues 665–700 (LQNP…PGPA) and 731–762 (EGRG…LDDW). Low complexity predominate over residues 733 to 746 (RGSSCGSLSSLGSG).

In terms of assembly, associates with alpha-, beta- and delta-catenins.

The protein localises to the cell membrane. Cadherins are calcium-dependent cell adhesion proteins. They preferentially interact with themselves in a homophilic manner in connecting cells; cadherins may thus contribute to the sorting of heterogeneous cell types. Cadherin-24 mediate strong cell-cell adhesion. The sequence is that of Cadherin-24 (Cdh24) from Mus musculus (Mouse).